Here is a 511-residue protein sequence, read N- to C-terminus: Maturase K (511 aa).

This sequence belongs to the intron maturase 2 family. MatK subfamily.

It is found in the plastid. The protein localises to the chloroplast. Functionally, usually encoded in the trnK tRNA gene intron. Probably assists in splicing its own and other chloroplast group II introns. This chain is Maturase K, found in Avena sativa (Oat).